Consider the following 197-residue polypeptide: Putative peptidyl-prolyl cis-trans isomerase (197 aa).

The PPIase cyclophilin-type domain occupies 14–195 (GEIKVVMHTN…HDVVIESIDV (182 aa)).

This sequence belongs to the cyclophilin-type PPIase family.

The catalysed reaction is [protein]-peptidylproline (omega=180) = [protein]-peptidylproline (omega=0). Functionally, PPIases accelerate the folding of proteins. It catalyzes the cis-trans isomerization of proline imidic peptide bonds in oligopeptides. This is Putative peptidyl-prolyl cis-trans isomerase from Staphylococcus aureus (strain COL).